We begin with the raw amino-acid sequence, 157 residues long: Phosphopantetheine adenylyltransferase (157 aa).

Thr-8 contributes to the substrate binding site. ATP-binding positions include Thr-8–Phe-9 and His-16. The substrate site is built by Lys-40, Thr-72, and Arg-86. ATP is bound by residues Gly-87 to Arg-89, Glu-97, and Tyr-122 to Ser-128.

Belongs to the bacterial CoaD family. In terms of assembly, homohexamer. It depends on Mg(2+) as a cofactor.

The protein localises to the cytoplasm. It catalyses the reaction (R)-4'-phosphopantetheine + ATP + H(+) = 3'-dephospho-CoA + diphosphate. It functions in the pathway cofactor biosynthesis; coenzyme A biosynthesis; CoA from (R)-pantothenate: step 4/5. Its function is as follows. Reversibly transfers an adenylyl group from ATP to 4'-phosphopantetheine, yielding dephospho-CoA (dPCoA) and pyrophosphate. The protein is Phosphopantetheine adenylyltransferase of Prochlorococcus marinus (strain MIT 9301).